A 308-amino-acid chain; its full sequence is Ornithine carbamoyltransferase (308 aa).

Residues 52-55 (STRT), glutamine 79, arginine 103, and 130-133 (HPLQ) each bind carbamoyl phosphate. L-ornithine is bound by residues asparagine 162, aspartate 224, and 228 to 229 (SM). Carbamoyl phosphate-binding positions include 264 to 265 (CL) and arginine 292.

The protein belongs to the aspartate/ornithine carbamoyltransferase superfamily. OTCase family.

Its subcellular location is the cytoplasm. The catalysed reaction is carbamoyl phosphate + L-ornithine = L-citrulline + phosphate + H(+). The protein operates within amino-acid biosynthesis; L-arginine biosynthesis; L-arginine from L-ornithine and carbamoyl phosphate: step 1/3. Reversibly catalyzes the transfer of the carbamoyl group from carbamoyl phosphate (CP) to the N(epsilon) atom of ornithine (ORN) to produce L-citrulline. This chain is Ornithine carbamoyltransferase, found in Pyrobaculum calidifontis (strain DSM 21063 / JCM 11548 / VA1).